A 561-amino-acid chain; its full sequence is Microtubule-associated protein VP6 (561 aa).

In terms of assembly, interacts with VP2.

The protein localises to the virion. It localises to the host cytoplasm. Its subcellular location is the host cytoskeleton. In terms of biological role, minor inner capsid component. Displays NTPase and RNA 5'-triphosphatase (RTPase) activities. May function as a cofactor of polymerase VP2. Associates with microtubules and plays a role in the formation, structural organization and morphology of viral inclusions, where the assembly of cores and the replication of viral RNA occur. The protein is Microtubule-associated protein VP6 (S6) of Lymantria dispar cypovirus 1 (isolate Rao) (LdCPV-1).